Here is a 449-residue protein sequence, read N- to C-terminus: UNC93-like protein MFSD11 (449 aa).

A helical membrane pass occupies residues 8 to 28; that stretch reads LFNIIILGVAFMFMFTAFQTC. N-linked (GlcNAc...) asparagine glycosylation is present at Asn-40. Transmembrane regions (helical) follow at residues 53 to 73, 74 to 94, 96 to 116, 138 to 158, and 170 to 190; these read AIIY…VAIV, GPQL…AVFI, PFPW…AVLW, IFWA…YFAW, and RTVF…FFLI. Position 204 is a phosphoserine (Ser-204). Transmembrane regions (helical) follow at residues 239–259, 277–297, 309–329, 359–379, 385–405, and 410–430; these read MLLL…FSGV, LIGL…SLFG, PVVL…FLNM, FLLG…LGFL, APAF…AFFY, and LLHW…ISFF.

Belongs to the unc-93 family.

The protein resides in the membrane. The protein is UNC93-like protein MFSD11 (MFSD11) of Macaca fascicularis (Crab-eating macaque).